A 277-amino-acid polypeptide reads, in one-letter code: Pantothenate synthetase (277 aa).

28–35 (MGALHSGH) lines the ATP pocket. Catalysis depends on His35, which acts as the Proton donor. Gln59 contributes to the (R)-pantoate binding site. Residue Gln59 participates in beta-alanine binding. ATP contacts are provided by residues 145-148 (GEKD), Val174, and 182-185 (LSSR).

It belongs to the pantothenate synthetase family. In terms of assembly, homodimer.

It localises to the cytoplasm. It catalyses the reaction (R)-pantoate + beta-alanine + ATP = (R)-pantothenate + AMP + diphosphate + H(+). It functions in the pathway cofactor biosynthesis; (R)-pantothenate biosynthesis; (R)-pantothenate from (R)-pantoate and beta-alanine: step 1/1. Catalyzes the condensation of pantoate with beta-alanine in an ATP-dependent reaction via a pantoyl-adenylate intermediate. The polypeptide is Pantothenate synthetase (Anaplasma marginale (strain St. Maries)).